A 239-amino-acid polypeptide reads, in one-letter code: Large ribosomal subunit protein uL1 (239 aa).

The protein belongs to the universal ribosomal protein uL1 family. In terms of assembly, part of the 50S ribosomal subunit.

Binds directly to 23S rRNA. The L1 stalk is quite mobile in the ribosome, and is involved in E site tRNA release. Functionally, protein L1 is also a translational repressor protein, it controls the translation of the L11 operon by binding to its mRNA. The chain is Large ribosomal subunit protein uL1 from Mycolicibacterium gilvum (strain PYR-GCK) (Mycobacterium gilvum (strain PYR-GCK)).